The following is a 451-amino-acid chain: Chromosomal replication initiator protein DnaA (451 aa).

Residues 1-77 (MTENEQIFWN…EVYNAQISVD (77 aa)) form a domain I, interacts with DnaA modulators region. A domain II region spans residues 77–110 (DYVFEEDLMIEQNQTKINQKPKQQALNSLPTVTS). Residues 111–329 (DLNSKYSFEN…GALKDISLVA (219 aa)) form a domain III, AAA+ region region. Residues Gly155, Gly157, Lys158, and Thr159 each coordinate ATP. The interval 330–451 (NFKQIDTITV…EIETIKNKIK (122 aa)) is domain IV, binds dsDNA.

This sequence belongs to the DnaA family. Oligomerizes as a right-handed, spiral filament on DNA at oriC.

The protein resides in the cytoplasm. In terms of biological role, plays an essential role in the initiation and regulation of chromosomal replication. ATP-DnaA binds to the origin of replication (oriC) to initiate formation of the DNA replication initiation complex once per cell cycle. Binds the DnaA box (a 9 base pair repeat at the origin) and separates the double-stranded (ds)DNA. Forms a right-handed helical filament on oriC DNA; dsDNA binds to the exterior of the filament while single-stranded (ss)DNA is stabiized in the filament's interior. The ATP-DnaA-oriC complex binds and stabilizes one strand of the AT-rich DNA unwinding element (DUE), permitting loading of DNA polymerase. After initiation quickly degrades to an ADP-DnaA complex that is not apt for DNA replication. Binds acidic phospholipids. The half-life of ATP-DnaA is 12 minutes at 37 degrees Celsius, in E.coli the half-life is about 41 minutes. The chain is Chromosomal replication initiator protein DnaA from Streptococcus pyogenes serotype M1.